A 214-amino-acid polypeptide reads, in one-letter code: MSDMYHQLPPEIWVKIMDHLKEVSLLLTNKDFFGLFNLIDVEKNMIEHIVENGYLDVLKYIDSLKNQNKFIVDKEKFSVKSLDKYLIMSCEFGHLEMTKYFVSQGANVKTDNNMPLRLASQNGHIDTIKYLIENSVDVRANNDCALRMASLFGHINVVKYLVDMGADVTSDNNFAIIHTARSGRLELAKYLAEKGADIRASNDSAVIRASERDI.

ANK repeat units follow at residues 41–70 (VEKN…QNKF), 81–110 (SLDK…NVKT), 111–140 (DNNM…DVRA), 142–170 (NDCA…DVTS), and 172–200 (NNFA…DIRA).

The polypeptide is Putative ankyrin repeat protein R844 (Acanthamoeba polyphaga mimivirus (APMV)).